A 108-amino-acid polypeptide reads, in one-letter code: Large ribosomal subunit protein eL32 (108 aa).

Residues 21–30 (RRPRGRTSKM) are compositionally biased toward basic residues. The interval 21 to 44 (RRPRGRTSKMRRYEKGKPAMPAIG) is disordered.

It belongs to the eukaryotic ribosomal protein eL32 family.

The chain is Large ribosomal subunit protein eL32 (rpl32e) from Methanothermobacter thermautotrophicus (strain ATCC 29096 / DSM 1053 / JCM 10044 / NBRC 100330 / Delta H) (Methanobacterium thermoautotrophicum).